Here is a 342-residue protein sequence, read N- to C-terminus: S-adenosylmethionine:tRNA ribosyltransferase-isomerase (342 aa).

The protein belongs to the QueA family. In terms of assembly, monomer.

The protein localises to the cytoplasm. The enzyme catalyses 7-aminomethyl-7-carbaguanosine(34) in tRNA + S-adenosyl-L-methionine = epoxyqueuosine(34) in tRNA + adenine + L-methionine + 2 H(+). It participates in tRNA modification; tRNA-queuosine biosynthesis. Its function is as follows. Transfers and isomerizes the ribose moiety from AdoMet to the 7-aminomethyl group of 7-deazaguanine (preQ1-tRNA) to give epoxyqueuosine (oQ-tRNA). The sequence is that of S-adenosylmethionine:tRNA ribosyltransferase-isomerase from Brevibacillus brevis (strain 47 / JCM 6285 / NBRC 100599).